The sequence spans 442 residues: Citrate synthase (442 aa).

Active-site residues include H274, H320, and D375.

The protein belongs to the citrate synthase family.

It catalyses the reaction oxaloacetate + acetyl-CoA + H2O = citrate + CoA + H(+). It participates in carbohydrate metabolism; tricarboxylic acid cycle; isocitrate from oxaloacetate: step 1/2. Functionally, catalyzes both citrate generation and citrate cleavage. Part of a reversible tricarboxylic acid (TCA) cycle that can fix carbon dioxide autotrophically and may represent an ancestral mode of the conventional reductive TCA (rTCA) cycle. The direction is controlled by the available carbon source(s). This chain is Citrate synthase, found in Thermosulfidibacter takaii (strain DSM 17441 / JCM 13301 / NBRC 103674 / ABI70S6).